A 698-amino-acid chain; its full sequence is Polyribonucleotide nucleotidyltransferase (698 aa).

Residues Asp-490 and Asp-496 each contribute to the Mg(2+) site. In terms of domain architecture, KH spans 557–616 (PKVVTMTIKPDKIRDVIGPGGKKINEIIDETGVKLDIEQDGTIFIGAVDQAMINRAREII). The 69-residue stretch at 626 to 694 (GQTYQATVKR…KQGRVNASHR (69 aa)) folds into the S1 motif domain.

It belongs to the polyribonucleotide nucleotidyltransferase family. Requires Mg(2+) as cofactor.

The protein localises to the cytoplasm. It catalyses the reaction RNA(n+1) + phosphate = RNA(n) + a ribonucleoside 5'-diphosphate. Involved in mRNA degradation. Catalyzes the phosphorolysis of single-stranded polyribonucleotides processively in the 3'- to 5'-direction. The sequence is that of Polyribonucleotide nucleotidyltransferase from Staphylococcus aureus (strain Mu3 / ATCC 700698).